The sequence spans 303 residues: Coenzyme PQQ synthesis protein B (303 aa).

It belongs to the PqqB family.

It functions in the pathway cofactor biosynthesis; pyrroloquinoline quinone biosynthesis. Functionally, may be involved in the transport of PQQ or its precursor to the periplasm. This chain is Coenzyme PQQ synthesis protein B, found in Pseudomonas fluorescens (strain SBW25).